The sequence spans 338 residues: Holliday junction branch migration complex subunit RuvB (338 aa).

The interval 1–181 is large ATPase domain (RuvB-L); the sequence is MDRIVEIEKV…FGMDFRLQFY (181 aa). Residues Leu-20, Arg-21, Gly-62, Lys-65, Thr-66, Thr-67, 128–130, Arg-171, Tyr-181, and Arg-218 each bind ATP; that span reads EDF. Mg(2+) is bound at residue Thr-66. The segment at 182-252 is small ATPAse domain (RuvB-S); it reads STAELSRIIQ…RAKEGLNALG (71 aa). A head domain (RuvB-H) region spans residues 255 to 338; the sequence is SLGFDEMDIK…NRTKGLFDGE (84 aa). Residues Arg-309 and Arg-314 each contribute to the DNA site.

This sequence belongs to the RuvB family. In terms of assembly, homohexamer. Forms an RuvA(8)-RuvB(12)-Holliday junction (HJ) complex. HJ DNA is sandwiched between 2 RuvA tetramers; dsDNA enters through RuvA and exits via RuvB. An RuvB hexamer assembles on each DNA strand where it exits the tetramer. Each RuvB hexamer is contacted by two RuvA subunits (via domain III) on 2 adjacent RuvB subunits; this complex drives branch migration. In the full resolvosome a probable DNA-RuvA(4)-RuvB(12)-RuvC(2) complex forms which resolves the HJ.

It localises to the cytoplasm. It carries out the reaction ATP + H2O = ADP + phosphate + H(+). The RuvA-RuvB-RuvC complex processes Holliday junction (HJ) DNA during genetic recombination and DNA repair, while the RuvA-RuvB complex plays an important role in the rescue of blocked DNA replication forks via replication fork reversal (RFR). RuvA specifically binds to HJ cruciform DNA, conferring on it an open structure. The RuvB hexamer acts as an ATP-dependent pump, pulling dsDNA into and through the RuvAB complex. RuvB forms 2 homohexamers on either side of HJ DNA bound by 1 or 2 RuvA tetramers; 4 subunits per hexamer contact DNA at a time. Coordinated motions by a converter formed by DNA-disengaged RuvB subunits stimulates ATP hydrolysis and nucleotide exchange. Immobilization of the converter enables RuvB to convert the ATP-contained energy into a lever motion, pulling 2 nucleotides of DNA out of the RuvA tetramer per ATP hydrolyzed, thus driving DNA branch migration. The RuvB motors rotate together with the DNA substrate, which together with the progressing nucleotide cycle form the mechanistic basis for DNA recombination by continuous HJ branch migration. Branch migration allows RuvC to scan DNA until it finds its consensus sequence, where it cleaves and resolves cruciform DNA. In Campylobacter curvus (strain 525.92), this protein is Holliday junction branch migration complex subunit RuvB.